The following is a 261-amino-acid chain: Lysoplasmalogenase (261 aa).

Transmembrane regions (helical) follow at residues 29–49 (GWVV…VIAL), 65–85 (PAFK…HPIG), 90–107 (WLVP…LLAI), 111–133 (TWAF…GALL), 146–166 (VAAV…FWPH), 172–192 (LTIP…TALL), 197–217 (TIWT…IGIG), and 227–247 (AVPI…GFFF).

This sequence belongs to the TMEM86 family.

Its subcellular location is the cell membrane. It carries out the reaction a 1-O-(1Z-alkenyl)-sn-glycero-3-phosphocholine + H2O = a 2,3-saturated aldehyde + sn-glycerol 3-phosphocholine. The catalysed reaction is a 1-O-(1Z-alkenyl)-sn-glycero-3-phosphoethanolamine + H2O = a 2,3-saturated aldehyde + sn-glycero-3-phosphoethanolamine. Its function is as follows. Specifically hydrolyzes the vinyl ether bond of lysoplasmenylcholine (pLPC) and lysoplasmenylethanolamine (pLPE) to release a fatty aldehyde and glycerophospho-choline or glycerophospho-ethanolamine. This Mycobacterium bovis (strain ATCC BAA-935 / AF2122/97) protein is Lysoplasmalogenase.